The following is a 245-amino-acid chain: Tryptophan synthase alpha chain (245 aa).

Residues E37 and D48 each act as proton acceptor in the active site.

Belongs to the TrpA family. Tetramer of two alpha and two beta chains.

It carries out the reaction (1S,2R)-1-C-(indol-3-yl)glycerol 3-phosphate + L-serine = D-glyceraldehyde 3-phosphate + L-tryptophan + H2O. It participates in amino-acid biosynthesis; L-tryptophan biosynthesis; L-tryptophan from chorismate: step 5/5. In terms of biological role, the alpha subunit is responsible for the aldol cleavage of indoleglycerol phosphate to indole and glyceraldehyde 3-phosphate. The sequence is that of Tryptophan synthase alpha chain from Saccharolobus solfataricus (strain ATCC 35092 / DSM 1617 / JCM 11322 / P2) (Sulfolobus solfataricus).